The following is a 437-amino-acid chain: 3-phosphoshikimate 1-carboxyvinyltransferase (437 aa).

Lys28, Ser29, and Arg33 together coordinate 3-phosphoshikimate. Lys28 is a binding site for phosphoenolpyruvate. The phosphoenolpyruvate site is built by Gly97 and Arg125. Residues Ser168, Ser169, Gln170, Glu316, and His343 each coordinate 3-phosphoshikimate. Gln170 contributes to the phosphoenolpyruvate binding site. Glu316 functions as the Proton acceptor in the catalytic mechanism. Phosphoenolpyruvate-binding residues include Arg347, Arg388, and Lys413.

This sequence belongs to the EPSP synthase family. Monomer.

The protein resides in the cytoplasm. It carries out the reaction 3-phosphoshikimate + phosphoenolpyruvate = 5-O-(1-carboxyvinyl)-3-phosphoshikimate + phosphate. It functions in the pathway metabolic intermediate biosynthesis; chorismate biosynthesis; chorismate from D-erythrose 4-phosphate and phosphoenolpyruvate: step 6/7. Functionally, catalyzes the transfer of the enolpyruvyl moiety of phosphoenolpyruvate (PEP) to the 5-hydroxyl of shikimate-3-phosphate (S3P) to produce enolpyruvyl shikimate-3-phosphate and inorganic phosphate. This Rhodococcus erythropolis (strain PR4 / NBRC 100887) protein is 3-phosphoshikimate 1-carboxyvinyltransferase.